The sequence spans 391 residues: D-alanine--D-alanine ligase (391 aa).

The interval 1–24 is disordered; it reads MSSENLPQSPERAESPQAPRRKPR. The ATP-grasp domain maps to 171 to 381; it reads KRVFLSFGLP…YPELVDRLIQ (211 aa). 207-262 contacts ATP; sequence AGEHGWPLFIKPARGGSSMGITKVDSVEGLDAAIEEARRHDPKFLVESLLRGREIE. Positions 335, 348, and 350 each coordinate Mg(2+).

It belongs to the D-alanine--D-alanine ligase family. It depends on Mg(2+) as a cofactor. The cofactor is Mn(2+).

Its subcellular location is the cytoplasm. It catalyses the reaction 2 D-alanine + ATP = D-alanyl-D-alanine + ADP + phosphate + H(+). It functions in the pathway cell wall biogenesis; peptidoglycan biosynthesis. Its function is as follows. Cell wall formation. In Streptomyces griseus subsp. griseus (strain JCM 4626 / CBS 651.72 / NBRC 13350 / KCC S-0626 / ISP 5235), this protein is D-alanine--D-alanine ligase.